Consider the following 623-residue polypeptide: Bifunctional enzyme CysN/CysC (623 aa).

Residues 1–450 (MQSVIAYLKQ…HVARARIKGQ (450 aa)) are sulfate adenylyltransferase. Residues 14-228 (KPLLRFITCG…YLEALEPADV (215 aa)) enclose the tr-type G domain. A G1 region spans residues 23-30 (GSVDDGKS). Residue 23 to 30 (GSVDDGKS) participates in GTP binding. The tract at residues 81–85 (GITID) is G2. Residues 102 to 105 (DCPG) are G3. GTP-binding positions include 102–106 (DCPGH) and 157–160 (NKMD). The interval 157-160 (NKMD) is G4. Residues 194–196 (SAL) form a G5 region. The tract at residues 451-623 (TPKVLWFTGL…VLSLLGVEGK (173 aa)) is adenylyl-sulfate kinase. 459 to 466 (GLSGAGKS) is an ATP binding site. Residue Ser533 is the Phosphoserine intermediate of the active site.

This sequence in the C-terminal section; belongs to the APS kinase family. In the N-terminal section; belongs to the TRAFAC class translation factor GTPase superfamily. Classic translation factor GTPase family. CysN/NodQ subfamily. As to quaternary structure, heterodimer composed of CysD, the smaller subunit, and CysNC.

The catalysed reaction is sulfate + ATP + H(+) = adenosine 5'-phosphosulfate + diphosphate. The enzyme catalyses adenosine 5'-phosphosulfate + ATP = 3'-phosphoadenylyl sulfate + ADP + H(+). The protein operates within sulfur metabolism; hydrogen sulfide biosynthesis; sulfite from sulfate: step 1/3. Its pathway is sulfur metabolism; hydrogen sulfide biosynthesis; sulfite from sulfate: step 2/3. With CysD forms the ATP sulfurylase (ATPS) that catalyzes the adenylation of sulfate producing adenosine 5'-phosphosulfate (APS) and diphosphate, the first enzymatic step in sulfur assimilation pathway. APS synthesis involves the formation of a high-energy phosphoric-sulfuric acid anhydride bond driven by GTP hydrolysis by CysN coupled to ATP hydrolysis by CysD. In terms of biological role, APS kinase catalyzes the synthesis of activated sulfate. The protein is Bifunctional enzyme CysN/CysC (cysNC) of Xylella fastidiosa (strain Temecula1 / ATCC 700964).